Here is a 551-residue protein sequence, read N- to C-terminus: Probable alpha-glucosidase (551 aa).

Asp-212 serves as the catalytic Nucleophile. Glu-272 (proton donor) is an active-site residue.

It belongs to the glycosyl hydrolase 13 family.

It carries out the reaction Hydrolysis of terminal, non-reducing (1-&gt;4)-linked alpha-D-glucose residues with release of alpha-D-glucose.. The protein is Probable alpha-glucosidase (aglA) of Rhizobium meliloti (strain 1021) (Ensifer meliloti).